The sequence spans 51 residues: UPF0391 membrane protein Psyc_0130 (51 aa).

A run of 2 helical transmembrane segments spans residues 6–26 and 28–47; these read IIFA…VAGL and ANFA…VAFV.

This sequence belongs to the UPF0391 family.

It localises to the cell membrane. The polypeptide is UPF0391 membrane protein Psyc_0130 (Psychrobacter arcticus (strain DSM 17307 / VKM B-2377 / 273-4)).